A 160-amino-acid chain; its full sequence is MHTPENRPALTPGLTLVRLPHGEGLDLPAYETAGAAGMDLRAALPADEPMTIRPGERALVPTGFIFEIPAGHEGQIRPRSGLAFKHGITCLNTPGTVDSDYRGEVKVLLVNLGAEDFAVERGMRIAQMVIAPVTRLAIREAGGATTTARGAGGFGSTGTK.

Substrate-binding positions include 79 to 81 (RSG), N92, 96 to 98 (TVD), and K106.

Belongs to the dUTPase family. The cofactor is Mg(2+).

It catalyses the reaction dUTP + H2O = dUMP + diphosphate + H(+). Its pathway is pyrimidine metabolism; dUMP biosynthesis; dUMP from dCTP (dUTP route): step 2/2. In terms of biological role, this enzyme is involved in nucleotide metabolism: it produces dUMP, the immediate precursor of thymidine nucleotides and it decreases the intracellular concentration of dUTP so that uracil cannot be incorporated into DNA. This chain is Deoxyuridine 5'-triphosphate nucleotidohydrolase, found in Rhizobium meliloti (strain 1021) (Ensifer meliloti).